Consider the following 177-residue polypeptide: Large ribosomal subunit protein uL10 (177 aa).

It belongs to the universal ribosomal protein uL10 family. In terms of assembly, part of the ribosomal stalk of the 50S ribosomal subunit. The N-terminus interacts with L11 and the large rRNA to form the base of the stalk. The C-terminus forms an elongated spine to which L12 dimers bind in a sequential fashion forming a multimeric L10(L12)X complex.

In terms of biological role, forms part of the ribosomal stalk, playing a central role in the interaction of the ribosome with GTP-bound translation factors. This chain is Large ribosomal subunit protein uL10, found in Thermoanaerobacter sp. (strain X514).